The chain runs to 464 residues: UDP-glycosyltransferase 83A1 (464 aa).

Residues S295, 341-343 (APQ), 358-366 (HCGWNSTLE), and 380-383 (FADQ) each bind UDP-alpha-D-glucose.

This sequence belongs to the UDP-glycosyltransferase family.

The protein is UDP-glycosyltransferase 83A1 (UGT83A1) of Arabidopsis thaliana (Mouse-ear cress).